Reading from the N-terminus, the 346-residue chain is 3 beta-hydroxysteroid dehydrogenase/Delta 5--&gt;4-isomerase (346 aa).

Tyrosine 147 serves as the catalytic Proton acceptor. Lysine 151 is an NAD(+) binding site.

This sequence belongs to the 3-beta-HSD family.

The enzyme catalyses a 3beta-hydroxy-Delta(5)-steroid + NAD(+) = a 3-oxo-Delta(5)-steroid + NADH + H(+). The catalysed reaction is a 3-oxo-Delta(5)-steroid = a 3-oxo-Delta(4)-steroid. Its pathway is lipid metabolism; steroid biosynthesis. In terms of biological role, catalyzes the oxidative conversion of Delta(5)-ene-3-beta-hydroxy steroid, and the oxidative conversion of ketosteroids. The 3-beta-HSD enzymatic system plays a crucial role in the biosynthesis of all classes of hormonal steroids. During viral infection, steroid production contributes to virulence by inhibiting the host inflammatory response. The protein is 3 beta-hydroxysteroid dehydrogenase/Delta 5--&gt;4-isomerase (OPG174) of Monkeypox virus.